Here is a 614-residue protein sequence, read N- to C-terminus: Zinc metalloproteinase-disintegrin-like BmMP (614 aa).

A signal peptide spans 1-20 (MIQALLVTICLAVFPYQGSS). The propeptide occupies 21–188 (IILESGNVND…WESDEPIRNA (168 aa)). N-linked (GlcNAc...) asparagine glycosylation is present at N187. One can recognise a Peptidase M12B domain in the interval 205-401 (KYIEFYVAVD…DRPQCILNKP (197 aa)). 17 cysteine pairs are disulfide-bonded: C316–C396, C356–C380, C359–C364, C412–C441, C423–C436, C425–C431, C435–C458, C449–C455, C454–C480, C467–C487, C474–C506, C499–C511, C518–C568, C533–C576, C546–C556, C563–C602, and C596–C607. H341 contacts Zn(2+). E342 is an active-site residue. Zn(2+) is bound by residues H345 and H351. The Disintegrin domain occupies 409–495 (PAICGNYFVE…ECPTDIFRRN (87 aa)). Residues 473-475 (DCD) carry the D/ECD-tripeptide motif.

This sequence belongs to the venom metalloproteinase (M12B) family. P-III subfamily. P-IIIa sub-subfamily. As to quaternary structure, monomer. Requires Zn(2+) as cofactor. Expressed by the venom gland.

Its subcellular location is the secreted. In terms of biological role, snake venom zinc metalloproteinase that inhibits platelet aggregation and degrades fibrinogen. The sequence is that of Zinc metalloproteinase-disintegrin-like BmMP from Bungarus multicinctus (Many-banded krait).